The primary structure comprises 522 residues: Glucans biosynthesis protein G (522 aa).

Positions 1 to 33 are cleaved as a signal peptide; the sequence is MLVNILSKKPRAASVRWLGATVLFTLLTSPAWA.

It belongs to the OpgD/OpgG family.

The protein localises to the periplasm. It functions in the pathway glycan metabolism; osmoregulated periplasmic glucan (OPG) biosynthesis. Functionally, involved in the biosynthesis of osmoregulated periplasmic glucans (OPGs). The chain is Glucans biosynthesis protein G from Serratia proteamaculans (strain 568).